Here is an 82-residue protein sequence, read N- to C-terminus: Escargot/snail protein homolog (82 aa).

4 C2H2-type zinc fingers span residues 1–5, 18–40, 44–66, and 72–82; these read HLQFH, FSCK…IRTH, CKCD…IRTH, and FSCQHCHRAFA.

The protein belongs to the snail C2H2-type zinc-finger protein family.

The protein localises to the nucleus. This is Escargot/snail protein homolog from Bradysia coprophila (Dark-winged fungus gnat).